The following is a 126-amino-acid chain: Glycine cleavage system H protein (126 aa).

Residues 22-103 (KAYIGITDYA…PYGSWMALVE (82 aa)) enclose the Lipoyl-binding domain. Position 63 is an N6-lipoyllysine (Lys-63).

Belongs to the GcvH family. As to quaternary structure, the glycine cleavage system is composed of four proteins: P, T, L and H. It depends on (R)-lipoate as a cofactor.

In terms of biological role, the glycine cleavage system catalyzes the degradation of glycine. The H protein shuttles the methylamine group of glycine from the P protein to the T protein. The polypeptide is Glycine cleavage system H protein (Thermoanaerobacter pseudethanolicus (strain ATCC 33223 / 39E) (Clostridium thermohydrosulfuricum)).